The sequence spans 285 residues: uncharacterized protein (285 aa).

A helical membrane pass occupies residues 197–217 (PTIGALLSLVSAFFSFIPFLM).

The protein resides in the membrane. This is an uncharacterized protein from Saccharomyces cerevisiae (strain ATCC 204508 / S288c) (Baker's yeast).